The chain runs to 268 residues: tRNA pseudouridine synthase A (268 aa).

Catalysis depends on Asp52, which acts as the Nucleophile. Tyr110 contacts substrate.

It belongs to the tRNA pseudouridine synthase TruA family. Homodimer.

The enzyme catalyses uridine(38/39/40) in tRNA = pseudouridine(38/39/40) in tRNA. Formation of pseudouridine at positions 38, 39 and 40 in the anticodon stem and loop of transfer RNAs. This is tRNA pseudouridine synthase A from Prochlorococcus marinus (strain MIT 9312).